A 318-amino-acid polypeptide reads, in one-letter code: Transaldolase (318 aa).

The Schiff-base intermediate with substrate role is filled by K132.

This sequence belongs to the transaldolase family. Type 1 subfamily. In terms of assembly, homodimer.

Its subcellular location is the cytoplasm. The catalysed reaction is D-sedoheptulose 7-phosphate + D-glyceraldehyde 3-phosphate = D-erythrose 4-phosphate + beta-D-fructose 6-phosphate. It participates in carbohydrate degradation; pentose phosphate pathway; D-glyceraldehyde 3-phosphate and beta-D-fructose 6-phosphate from D-ribose 5-phosphate and D-xylulose 5-phosphate (non-oxidative stage): step 2/3. Its function is as follows. Transaldolase is important for the balance of metabolites in the pentose-phosphate pathway. The protein is Transaldolase of Shewanella woodyi (strain ATCC 51908 / MS32).